We begin with the raw amino-acid sequence, 479 residues long: Aspartyl/glutamyl-tRNA(Asn/Gln) amidotransferase subunit B (479 aa).

Belongs to the GatB/GatE family. GatB subfamily. As to quaternary structure, heterotrimer of A, B and C subunits.

The enzyme catalyses L-glutamyl-tRNA(Gln) + L-glutamine + ATP + H2O = L-glutaminyl-tRNA(Gln) + L-glutamate + ADP + phosphate + H(+). The catalysed reaction is L-aspartyl-tRNA(Asn) + L-glutamine + ATP + H2O = L-asparaginyl-tRNA(Asn) + L-glutamate + ADP + phosphate + 2 H(+). Functionally, allows the formation of correctly charged Asn-tRNA(Asn) or Gln-tRNA(Gln) through the transamidation of misacylated Asp-tRNA(Asn) or Glu-tRNA(Gln) in organisms which lack either or both of asparaginyl-tRNA or glutaminyl-tRNA synthetases. The reaction takes place in the presence of glutamine and ATP through an activated phospho-Asp-tRNA(Asn) or phospho-Glu-tRNA(Gln). The chain is Aspartyl/glutamyl-tRNA(Asn/Gln) amidotransferase subunit B from Streptococcus uberis (strain ATCC BAA-854 / 0140J).